Consider the following 77-residue polypeptide: Small ribosomal subunit protein uS17 (77 aa).

Belongs to the universal ribosomal protein uS17 family. As to quaternary structure, part of the 30S ribosomal subunit.

Its function is as follows. One of the primary rRNA binding proteins, it binds specifically to the 5'-end of 16S ribosomal RNA. This is Small ribosomal subunit protein uS17 from Rickettsia bellii (strain OSU 85-389).